The chain runs to 322 residues: MSSLGGGSQDAGGSSSSSTNGSGGSGSSGPKAGAADKSAVVAAAAPASVADDTPPPERRNKSGIISEPLNKSLRRSRPLSHYSSFGSSGGSGGGSMMGGESADKATAAAAAASLLANGHDLAAAMAVDKSNPTSKHKSGAVASLLSKAERATELAAEGQLTLQQFAQSTEMLKRVVQEHLPLMSEAGAGLPDMEAVAGAEALNGQSDFPYLGAFPINPGLFIMTPAGVFLAESALHMAGLAEYPMQGELASAISSGKKKRKRCGMCAPCRRRINCEQCSSCRNRKTGHQICKFRKCEELKKKPSAALEKVMLPTGAAFRWFQ.

Residues 1–10 (MSSLGGGSQD) are compositionally biased toward gly residues. Residues 1-100 (MSSLGGGSQD…SGGGSMMGGE (100 aa)) are disordered. 2 stretches are compositionally biased toward low complexity: residues 11–20 (AGGSSSSSTN) and 28–52 (SGPK…VADD). Phosphothreonine is present on threonine 53. Gly residues predominate over residues 87-97 (SSGGSGGGSMM). Residues 256 to 297 (GKKKRKRCGMCAPCRRRINCEQCSSCRNRKTGHQICKFRKCE) form a CXXC-type zinc finger. Residues 257–262 (KKKRKR) carry the Nuclear localization signal motif. The Zn(2+) site is built by cysteine 263, cysteine 266, cysteine 269, cysteine 275, cysteine 278, cysteine 281, cysteine 291, and cysteine 296.

As to quaternary structure, interacts with DVL1. Interacts with RBPJ.

It is found in the nucleus. Its subcellular location is the cytoplasm. Functionally, may indirectly participate in activation of the NF-kappa-B and MAPK pathways. Acts as a mediator of BMP4-mediated modulation of canonical Wnt signaling activity in neural stem cells. Required for DNA damage-induced ATM phosphorylation, p53 activation and cell cycle arrest. Involved in myelopoiesis. Transcription factor. Binds to the oxygen responsive element of COX4I2 and represses its transcription under hypoxia conditions (4% oxygen), as well as normoxia conditions (20% oxygen). May repress COX4I2 transactivation induced by CHCHD2 and RBPJ. Binds preferentially to DNA containing cytidine-phosphate-guanosine (CpG) dinucleotides over CpH (H=A, T, and C), hemimethylated-CpG and hemimethylated-hydroxymethyl-CpG. This Homo sapiens (Human) protein is CXXC-type zinc finger protein 5 (CXXC5).